Consider the following 1489-residue polypeptide: Ras GTPase-activating-like protein rng2 (1489 aa).

The region spanning 41–147 (LCRVDEAKKW…YCIHALSYFL (107 aa)) is the Calponin-homology (CH) domain. IQ domains follow at residues 359-388 (QSSS…AYDE), 389-418 (LVNW…QEEA), 418-449 (ATKS…DLFT), 535-564 (ELDN…KLKA), 565-594 (STSS…SFQK), and 655-684 (FIPE…NFHK). Residues 734-770 (EEEVLLEKMRKEIVQQVRDNEEIEVHINELDVKIALL) adopt a coiled-coil conformation. Residues 870–1110 (VLLLRFISQV…QDTMLMLERL (241 aa)) form the Ras-GAP domain. Residues 1330–1364 (QSLLNLREKRAFLDSQLKSYNEYIEQAMETLQSKK) are a coiled coil.

As to quaternary structure, interacts with calmodulin cam1.

The protein localises to the cytoplasm. It localises to the cytoskeleton. It is found in the nucleus envelope. Its subcellular location is the microtubule organizing center. The protein resides in the spindle pole body. In terms of biological role, component of the contractile F-actin ring; required for its construction following assembly of F-actin at the division site. This is Ras GTPase-activating-like protein rng2 from Schizosaccharomyces pombe (strain 972 / ATCC 24843) (Fission yeast).